The following is a 244-amino-acid chain: 7-cyano-7-deazaguanine synthase (244 aa).

17-27 (FSGGQDSTTCL) contributes to the ATP binding site. Residues cysteine 205, cysteine 220, cysteine 223, and cysteine 226 each coordinate Zn(2+).

It belongs to the QueC family. Requires Zn(2+) as cofactor.

The catalysed reaction is 7-carboxy-7-deazaguanine + NH4(+) + ATP = 7-cyano-7-deazaguanine + ADP + phosphate + H2O + H(+). It participates in purine metabolism; 7-cyano-7-deazaguanine biosynthesis. Its function is as follows. Catalyzes the ATP-dependent conversion of 7-carboxy-7-deazaguanine (CDG) to 7-cyano-7-deazaguanine (preQ(0)). The sequence is that of 7-cyano-7-deazaguanine synthase from Bordetella pertussis (strain Tohama I / ATCC BAA-589 / NCTC 13251).